A 428-amino-acid chain; its full sequence is Trigger factor (428 aa).

A PPIase FKBP-type domain is found at 163–248 (GDTVVIDFEG…VHEVKAKQLP (86 aa)).

This sequence belongs to the FKBP-type PPIase family. Tig subfamily.

The protein resides in the cytoplasm. The catalysed reaction is [protein]-peptidylproline (omega=180) = [protein]-peptidylproline (omega=0). Involved in protein export. Acts as a chaperone by maintaining the newly synthesized protein in an open conformation. Functions as a peptidyl-prolyl cis-trans isomerase. The chain is Trigger factor from Geobacillus kaustophilus (strain HTA426).